A 235-amino-acid chain; its full sequence is Ubiquinone/menaquinone biosynthesis C-methyltransferase UbiE (235 aa).

S-adenosyl-L-methionine-binding residues include Thr-59, Asp-84, and Ser-123.

This sequence belongs to the class I-like SAM-binding methyltransferase superfamily. MenG/UbiE family.

The enzyme catalyses a 2-demethylmenaquinol + S-adenosyl-L-methionine = a menaquinol + S-adenosyl-L-homocysteine + H(+). It carries out the reaction a 2-methoxy-6-(all-trans-polyprenyl)benzene-1,4-diol + S-adenosyl-L-methionine = a 5-methoxy-2-methyl-3-(all-trans-polyprenyl)benzene-1,4-diol + S-adenosyl-L-homocysteine + H(+). It participates in quinol/quinone metabolism; menaquinone biosynthesis; menaquinol from 1,4-dihydroxy-2-naphthoate: step 2/2. The protein operates within cofactor biosynthesis; ubiquinone biosynthesis. Functionally, methyltransferase required for the conversion of demethylmenaquinol (DMKH2) to menaquinol (MKH2) and the conversion of 2-polyprenyl-6-methoxy-1,4-benzoquinol (DDMQH2) to 2-polyprenyl-3-methyl-6-methoxy-1,4-benzoquinol (DMQH2). This is Ubiquinone/menaquinone biosynthesis C-methyltransferase UbiE from Campylobacter jejuni subsp. jejuni serotype O:6 (strain 81116 / NCTC 11828).